A 199-amino-acid polypeptide reads, in one-letter code: Ribosome maturation factor RimM (199 aa).

One can recognise a PRC barrel domain in the interval 93–169 (DDEYYHADLI…IELPDEIDGE (77 aa)). Residues 164–199 (DEIDGEDRASADESASAEDDAAAPNSARHPRESGDP) are disordered.

Belongs to the RimM family. As to quaternary structure, binds ribosomal protein uS19.

The protein resides in the cytoplasm. Functionally, an accessory protein needed during the final step in the assembly of 30S ribosomal subunit, possibly for assembly of the head region. Essential for efficient processing of 16S rRNA. May be needed both before and after RbfA during the maturation of 16S rRNA. It has affinity for free ribosomal 30S subunits but not for 70S ribosomes. The polypeptide is Ribosome maturation factor RimM (Bradyrhizobium sp. (strain ORS 278)).